Here is a 163-residue protein sequence, read N- to C-terminus: uncharacterized protein (163 aa).

Residues 1–54 (MGKSARLRRSQTSSPENVLLGKDSSDDPYRSDSETESNSSSGTESNMSSDSTTS) are disordered. Positions 23–33 (DSSDDPYRSDS) are enriched in basic and acidic residues. Low complexity predominate over residues 36–52 (ESNSSSGTESNMSSDST). A coiled-coil region spans residues 69–143 (LRTELAEMEM…VEELESSTRE (75 aa)).

This is an uncharacterized protein from Arabidopsis thaliana (Mouse-ear cress).